Consider the following 329-residue polypeptide: Neuropeptides B/W receptor type 1 (329 aa).

The Extracellular portion of the chain corresponds to Met-1–Ala-39. Residues Asn-3, Asn-13, and Asn-25 are each glycosylated (N-linked (GlcNAc...) asparagine). The helical transmembrane segment at Val-40 to Val-63 threads the bilayer. At Leu-64–Thr-74 the chain is on the cytoplasmic side. Residues Asn-75–Phe-99 traverse the membrane as a helical segment. Residues Leu-100–Ile-114 lie on the Extracellular side of the membrane. A disulfide bridge connects residues Cys-111 and Cys-190. Residues Val-115–Ala-134 form a helical membrane-spanning segment. Residues Asp-135–Ala-159 are Cytoplasmic-facing. The helical transmembrane segment at Val-160–Ala-179 threads the bilayer. At Arg-180–Ala-204 the chain is on the extracellular side. The helical transmembrane segment at Ser-205 to Ile-226 threads the bilayer. The Cytoplasmic segment spans residues Thr-227–Arg-250. A helical membrane pass occupies residues Val-251–Val-275. Residues Ala-276–Pro-285 lie on the Extracellular side of the membrane. A helical transmembrane segment spans residues Leu-286 to Ala-300. Residues Asn-301 to Ala-329 lie on the Cytoplasmic side of the membrane.

It belongs to the G-protein coupled receptor 1 family.

Its subcellular location is the cell membrane. In terms of biological role, interacts specifically with a number of opioid ligands. Receptor for neuropeptides B and W, which may be involved in neuroendocrine system regulation, food intake and the organization of other signals. The sequence is that of Neuropeptides B/W receptor type 1 (Npbwr1) from Rattus norvegicus (Rat).